A 772-amino-acid polypeptide reads, in one-letter code: Carnitine O-palmitoyltransferase 1, muscle isoform (772 aa).

Residues 1–47 are Cytoplasmic-facing; the sequence is MAEAHQAVAFQFTVTPEGVDFRLSREALKHIYLSGINSWKKRLIRIK. A helical membrane pass occupies residues 48 to 73; the sequence is NGILRGVYPGSPTSWLVVASATAGSS. The Mitochondrial intermembrane portion of the chain corresponds to 74–102; sequence YYNVDISMGLVNHIQRCLPERYGPYWTPQ. Residues 103-122 form a helical membrane-spanning segment; sequence TRALLSMAVVSTGVWMIGIF. Residues 123-772 are Cytoplasmic-facing; that stretch reads FFRQTLKLLL…DLFQVPKTDS (650 aa). The Proton acceptor role is filled by histidine 473. 555–567 serves as a coordination point for CoA; that stretch reads GKGLIKKCRTSPD. Positions 589 and 602 each coordinate (R)-carnitine.

It belongs to the carnitine/choline acetyltransferase family.

It is found in the mitochondrion outer membrane. The enzyme catalyses (R)-carnitine + hexadecanoyl-CoA = O-hexadecanoyl-(R)-carnitine + CoA. Its pathway is lipid metabolism; fatty acid beta-oxidation. Functionally, catalyzes the transfer of the acyl group of long-chain fatty acid-CoA conjugates onto carnitine, an essential step for the mitochondrial uptake of long-chain fatty acids and their subsequent beta-oxidation in the mitochondrion. In Sus scrofa (Pig), this protein is Carnitine O-palmitoyltransferase 1, muscle isoform (CPT1B).